The following is a 633-amino-acid chain: Chaperone protein HtpG (633 aa).

The interval 1–344 (MSLQPQAETL…SNDLPLNISR (344 aa)) is a; substrate-binding. The b stretch occupies residues 345-560 (ELLQSNEVIN…ENEMSGHLQR (216 aa)). Residues 561–633 (LLIQTGQDFM…KGLNELLLDS (73 aa)) are c.

The protein belongs to the heat shock protein 90 family. Homodimer.

It is found in the cytoplasm. Its function is as follows. Molecular chaperone. Has ATPase activity. This chain is Chaperone protein HtpG, found in Coxiella burnetii (strain RSA 493 / Nine Mile phase I).